The primary structure comprises 192 residues: Adenylate kinase (192 aa).

10-15 (GAGKGT) serves as a coordination point for ATP. The tract at residues 30-59 (STGDMLRAAVAQATEVGKRAKAVMDAGQLV) is NMP. AMP-binding positions include T31, R36, 57–59 (QLV), 85–88 (GYPR), and Q92. Positions 126–142 (NRVAETVAAGGTVRSDD) are LID. R127 is an ATP binding site. AMP-binding residues include R139 and R150. An ATP-binding site is contributed by A178.

The protein belongs to the adenylate kinase family. Monomer.

It is found in the cytoplasm. It carries out the reaction AMP + ATP = 2 ADP. Its pathway is purine metabolism; AMP biosynthesis via salvage pathway; AMP from ADP: step 1/1. In terms of biological role, catalyzes the reversible transfer of the terminal phosphate group between ATP and AMP. Plays an important role in cellular energy homeostasis and in adenine nucleotide metabolism. The polypeptide is Adenylate kinase (Sinorhizobium medicae (strain WSM419) (Ensifer medicae)).